A 345-amino-acid chain; its full sequence is Phosphoribosylformylglycinamidine cyclo-ligase (345 aa).

This sequence belongs to the AIR synthase family.

Its subcellular location is the cytoplasm. It carries out the reaction 2-formamido-N(1)-(5-O-phospho-beta-D-ribosyl)acetamidine + ATP = 5-amino-1-(5-phospho-beta-D-ribosyl)imidazole + ADP + phosphate + H(+). The protein operates within purine metabolism; IMP biosynthesis via de novo pathway; 5-amino-1-(5-phospho-D-ribosyl)imidazole from N(2)-formyl-N(1)-(5-phospho-D-ribosyl)glycinamide: step 2/2. The sequence is that of Phosphoribosylformylglycinamidine cyclo-ligase from Anaeromyxobacter dehalogenans (strain 2CP-C).